We begin with the raw amino-acid sequence, 616 residues long: Dihydroxy-acid dehydratase (616 aa).

D81 contributes to the Mg(2+) binding site. C122 is a binding site for [2Fe-2S] cluster. 2 residues coordinate Mg(2+): D123 and K124. Residue K124 is modified to N6-carboxylysine. Residue C195 participates in [2Fe-2S] cluster binding. A Mg(2+)-binding site is contributed by E491. The active-site Proton acceptor is S517.

Belongs to the IlvD/Edd family. In terms of assembly, homodimer. It depends on [2Fe-2S] cluster as a cofactor. Requires Mg(2+) as cofactor.

The enzyme catalyses (2R)-2,3-dihydroxy-3-methylbutanoate = 3-methyl-2-oxobutanoate + H2O. The catalysed reaction is (2R,3R)-2,3-dihydroxy-3-methylpentanoate = (S)-3-methyl-2-oxopentanoate + H2O. It participates in amino-acid biosynthesis; L-isoleucine biosynthesis; L-isoleucine from 2-oxobutanoate: step 3/4. Its pathway is amino-acid biosynthesis; L-valine biosynthesis; L-valine from pyruvate: step 3/4. Functionally, functions in the biosynthesis of branched-chain amino acids. Catalyzes the dehydration of (2R,3R)-2,3-dihydroxy-3-methylpentanoate (2,3-dihydroxy-3-methylvalerate) into 2-oxo-3-methylpentanoate (2-oxo-3-methylvalerate) and of (2R)-2,3-dihydroxy-3-methylbutanoate (2,3-dihydroxyisovalerate) into 2-oxo-3-methylbutanoate (2-oxoisovalerate), the penultimate precursor to L-isoleucine and L-valine, respectively. The protein is Dihydroxy-acid dehydratase of Tolumonas auensis (strain DSM 9187 / NBRC 110442 / TA 4).